A 300-amino-acid chain; its full sequence is Acetyl-coenzyme A carboxylase carboxyl transferase subunit beta 2 (300 aa).

Residues 26–294 (VWIKCPSCRE…ATAHKSEPIV (269 aa)) enclose the CoA carboxyltransferase N-terminal domain. Cys30, Cys33, Cys49, and Cys51 together coordinate Zn(2+). The segment at 30–51 (CPSCRELIYHKQLAERMKVCRC) adopts a C4-type zinc-finger fold.

The protein belongs to the AccD/PCCB family. In terms of assembly, acetyl-CoA carboxylase is a heterohexamer composed of biotin carboxyl carrier protein (AccB), biotin carboxylase (AccC) and two subunits each of ACCase subunit alpha (AccA) and ACCase subunit beta (AccD). Requires Zn(2+) as cofactor.

It localises to the cytoplasm. The catalysed reaction is N(6)-carboxybiotinyl-L-lysyl-[protein] + acetyl-CoA = N(6)-biotinyl-L-lysyl-[protein] + malonyl-CoA. Its pathway is lipid metabolism; malonyl-CoA biosynthesis; malonyl-CoA from acetyl-CoA: step 1/1. Its function is as follows. Component of the acetyl coenzyme A carboxylase (ACC) complex. Biotin carboxylase (BC) catalyzes the carboxylation of biotin on its carrier protein (BCCP) and then the CO(2) group is transferred by the transcarboxylase to acetyl-CoA to form malonyl-CoA. The chain is Acetyl-coenzyme A carboxylase carboxyl transferase subunit beta 2 from Roseiflexus sp. (strain RS-1).